Reading from the N-terminus, the 309-residue chain is Taste receptor type 2 member 124 (309 aa).

Residues 1–7 are Extracellular-facing; the sequence is MVPVLHS. The chain crosses the membrane as a helical span at residues 8-28; that stretch reads LSTIILIAEFVWGNLSNGLIV. Topologically, residues 29 to 46 are cytoplasmic; it reads LKNCIDWINKKELSTVDQ. A helical membrane pass occupies residues 47 to 67; it reads ILIVLAISRISLIWETLIIWV. At 68 to 86 the chain is on the extracellular side; that stretch reads KDQLISSITIEELKIIVFS. A helical transmembrane segment spans residues 87–107; the sequence is FILSSHFSLWLATALSIFYLF. Over 108-127 the chain is Cytoplasmic; it reads RIPNCYWQIFLYLKWRIKQL. Residues 128–148 form a helical membrane-spanning segment; the sequence is IVHMLLGSLVFLVANMIQITI. Topologically, residues 149-183 are extracellular; that stretch reads TLEERFYQYGGNTSVNSMETEFSILIELMLFNMTM. Asparagine 160 and asparagine 180 each carry an N-linked (GlcNAc...) asparagine glycan. A helical membrane pass occupies residues 184–204; that stretch reads FSIIPFSLALISFLLLIFSLW. At 205-230 the chain is on the cytoplasmic side; it reads KHLQKMPLNSRGDRDPSATAHRNALR. Residues 231-251 form a helical membrane-spanning segment; the sequence is ILVSFLLLYTIYFLSLLISWV. Topologically, residues 252 to 261 are extracellular; that stretch reads AQKNQSELVH. An N-linked (GlcNAc...) asparagine glycan is attached at asparagine 255. Residues 262-282 traverse the membrane as a helical segment; sequence IICMITSLVYPSFHSYILILG. Residues 283-309 are Cytoplasmic-facing; that stretch reads NYKLKQTSLWVMRQLGCRMKRQNTPTT.

The protein belongs to the G-protein coupled receptor T2R family.

The protein localises to the membrane. Its function is as follows. Putative taste receptor which may play a role in the perception of bitterness. The polypeptide is Taste receptor type 2 member 124 (Mus musculus (Mouse)).